Reading from the N-terminus, the 1059-residue chain is MNNGKVRIYELSKELNLENKDILAVCQRLNISVKSHSSTITESEAELIRTTAENLPHSPSLSAAPEKSNSQNQDSGIGYNEQKKQQILEVRKPKPLLEKSQQKNHSKINNNLVTTPPNTSVLNNQVERVGISRPNSSLKSETLKDNSEVGDNSLVQHPNRPLNKDNTVKENYVPQKTDSNEKSKVEVPKLVAPPARPAPPSLNRNLRNTGVNKPNQKNKKPKQEGKKRKDKEEKPFEKPAIVSKKENKDTSIEKPTIASKKENKDTFQNRESVKTSASDTSSQLKPKHREKPTVKLKQEQKPQLAPKPKLTTPLKEESTDVNLGLDLEGKEPEDNVAETVSYDLEKPRRKTIAPSKPTLTKDKKVSKWEEEEEDTSEVIQKNAKSSAKNKRLRLKPLLEDEDEELAELLNKPAPVTMSLSLARPAKPKSFTEKNKPQPGSNISNLKKKSSQSHESVQSESNEQTQSAELKPVEKLVISASMTVQELALALAIPETEIIRRLFMKGIAVNITESLDIPTIEMVVKEEGIPIEVPEEQSAAKKTTEILEETDLASLQRRPPVVTIMGHVDHGKTSLLDSIRATKVAAGEAGGITQHIGAYHVDVEHEGQMQQVVFLDTPGHEAFTAMRARGARVTDVAVLVVAADDGVQPQTIEAISHAKAAEVPLIVAINKIDKEEANPDRVKQELMEHGLVPEEWGGDAIMVPVSAIQKQNLDTLLEMILLVSEVEDLQANPERLAKGTVIEANLDKARGPVATLLVQNGTLKVGDIIVAGSVYGKVRAMIDDRGYRVDKASPSFAVEVLGLRDVPQAGDEFKVFKNEKEASAITTERADAKRESRIMRRTSLGAVSVRAQEGELKELNLILKGDVQGSIEAIVAALRQLPQKEVQLRLLLSGAGEVTETDIDLAAASEAVIIGFNTTMASGARQAADAAGVDVREYNVIYKLLDDIQGAMEGLLDPELIEEPLGQVEVRAVFTINRGAVAGCYVLSGKVVRNCKVRVRRNGEIVYQGILDSLRRMKDDVKEVNAGYECGVSFDNFNNWSEGDIIEAYQMVTKRRKLST.

Polar residues-rich tracts occupy residues 55 to 75 and 107 to 126; these read LPHS…NQDS and KINN…NNQV. Disordered regions lie at residues 55–81, 93–394, and 418–468; these read LPHS…GYNE, PKPL…RLRL, and SLSL…QSAE. The span at 178–187 shows a compositional bias: basic and acidic residues; sequence DSNEKSKVEV. The segment covering 202 to 211 has biased composition (polar residues); the sequence is LNRNLRNTGV. The span at 216-229 shows a compositional bias: basic residues; the sequence is QKNKKPKQEGKKRK. 2 stretches are compositionally biased toward basic and acidic residues: residues 230-252 and 259-273; these read DKEE…DTSI and SKKE…RESV. Polar residues predominate over residues 274–284; sequence KTSASDTSSQL. Basic and acidic residues-rich tracts occupy residues 291 to 300 and 359 to 368; these read KPTVKLKQEQ and LTKDKKVSKW. Residues 452–463 are compositionally biased toward low complexity; that stretch reads SHESVQSESNEQ. In terms of domain architecture, tr-type G spans 556 to 733; the sequence is RRPPVVTIMG…EVEDLQANPE (178 aa). The interval 565–572 is G1; it reads GHVDHGKT. 565-572 lines the GTP pocket; it reads GHVDHGKT. Residues 590–594 are G2; sequence GITQH. Residues 615–618 are G3; it reads DTPG. GTP is bound by residues 615–619 and 669–672; these read DTPGH and NKID. The G4 stretch occupies residues 669 to 672; that stretch reads NKID. The G5 stretch occupies residues 705–707; it reads SAI.

The protein belongs to the TRAFAC class translation factor GTPase superfamily. Classic translation factor GTPase family. IF-2 subfamily.

Its subcellular location is the cytoplasm. In terms of biological role, one of the essential components for the initiation of protein synthesis. Protects formylmethionyl-tRNA from spontaneous hydrolysis and promotes its binding to the 30S ribosomal subunits. Also involved in the hydrolysis of GTP during the formation of the 70S ribosomal complex. This chain is Translation initiation factor IF-2, found in Trichodesmium erythraeum (strain IMS101).